Reading from the N-terminus, the 213-residue chain is Neuroligin-4, X-linked (213 aa).

A disordered region spans residues 1–56; it reads FQYVSTTTKVPPPDMTSFPYGTRRSPAKIWPTTKRPAITPANNPKHSKDPHKTGPE. At 1–73 the chain is on the extracellular side; that stretch reads FQYVSTTTKV…TKRDYSTELS (73 aa). The span at 46–55 shows a compositional bias: basic and acidic residues; it reads HSKDPHKTGP. Residues 74–94 traverse the membrane as a helical segment; it reads VTIAVGASLLFLNILAFAALY. The Cytoplasmic segment spans residues 95-213; sequence YKKDKRRHET…LPHGHSTTRV (119 aa). The residue at position 109 (Ser109) is a Phosphoserine.

The protein belongs to the type-B carboxylesterase/lipase family. Homodimer. Interacts with NRXN1 in a calcium-dependent manner. Interaction with neurexins is mediated by heparan sulfate glycan modification on neurexin. Interacts through its C-terminus with DLG4/PSD-95 third PDZ domain.

The protein localises to the cell membrane. Its subcellular location is the postsynaptic density membrane. Its function is as follows. Cell surface protein involved in cell-cell-interactions via its interactions with neurexin family members. The chain is Neuroligin-4, X-linked (NLGN4X) from Macaca mulatta (Rhesus macaque).